Here is a 587-residue protein sequence, read N- to C-terminus: Putative inactive receptor-like protein kinase At1g64210 (587 aa).

The N-terminal stretch at 1-19 (MQIFLFFFSLILCFVLISS) is a signal peptide. Residues 20–232 (QTLEDDKKAL…KTPFGLSQLA (213 aa)) lie on the Extracellular side of the membrane. Residues asparagine 37 and asparagine 44 are each glycosylated (N-linked (GlcNAc...) asparagine). LRR repeat units lie at residues 89–112 (SLKF…TNLK), 113–136 (SLTH…SELK), 137–160 (NLKV…SGLT), 161–183 (SLQV…HLPK), and 184–205 (LSQI…LQRF). N-linked (GlcNAc...) asparagine glycosylation is found at asparagine 149, asparagine 169, asparagine 188, and asparagine 214. A helical membrane pass occupies residues 233-253 (FLLILSAACVLCVSGLSFIMI). Topologically, residues 254 to 587 (TCFGKTRISG…IEDIRSVDAE (334 aa)) are cytoplasmic. The Protein kinase domain maps to 307-581 (SSSAEVLGKG…AQVLKLIEDI (275 aa)). Residue serine 309 is modified to Phosphoserine. Residues 313–321 (LGKGAFGTT) and lysine 335 each bind ATP. A Phosphoserine modification is found at serine 386. Phosphothreonine is present on residues threonine 462, threonine 463, threonine 466, and threonine 477.

The protein localises to the cell membrane. This Arabidopsis thaliana (Mouse-ear cress) protein is Putative inactive receptor-like protein kinase At1g64210.